The sequence spans 419 residues: UDP-N-acetylglucosamine 1-carboxyvinyltransferase (419 aa).

22–23 (KN) contributes to the phosphoenolpyruvate binding site. R91 provides a ligand contact to UDP-N-acetyl-alpha-D-glucosamine. The active-site Proton donor is C115. C115 carries the 2-(S-cysteinyl)pyruvic acid O-phosphothioketal modification. UDP-N-acetyl-alpha-D-glucosamine-binding positions include 120–124 (RPVDL), 160–163 (KVSV), D305, and V327.

This sequence belongs to the EPSP synthase family. MurA subfamily.

Its subcellular location is the cytoplasm. The catalysed reaction is phosphoenolpyruvate + UDP-N-acetyl-alpha-D-glucosamine = UDP-N-acetyl-3-O-(1-carboxyvinyl)-alpha-D-glucosamine + phosphate. Its pathway is cell wall biogenesis; peptidoglycan biosynthesis. Cell wall formation. Adds enolpyruvyl to UDP-N-acetylglucosamine. The chain is UDP-N-acetylglucosamine 1-carboxyvinyltransferase from Escherichia fergusonii (strain ATCC 35469 / DSM 13698 / CCUG 18766 / IAM 14443 / JCM 21226 / LMG 7866 / NBRC 102419 / NCTC 12128 / CDC 0568-73).